The following is a 137-amino-acid chain: ATP synthase epsilon chain (137 aa).

This sequence belongs to the ATPase epsilon chain family. F-type ATPases have 2 components, CF(1) - the catalytic core - and CF(0) - the membrane proton channel. CF(1) has five subunits: alpha(3), beta(3), gamma(1), delta(1), epsilon(1). CF(0) has three main subunits: a, b and c.

It localises to the cellular thylakoid membrane. Produces ATP from ADP in the presence of a proton gradient across the membrane. In Synechococcus sp. (strain JA-2-3B'a(2-13)) (Cyanobacteria bacterium Yellowstone B-Prime), this protein is ATP synthase epsilon chain.